The following is a 254-amino-acid chain: 3-deoxy-manno-octulosonate cytidylyltransferase (254 aa).

It belongs to the KdsB family.

It localises to the cytoplasm. The enzyme catalyses 3-deoxy-alpha-D-manno-oct-2-ulosonate + CTP = CMP-3-deoxy-beta-D-manno-octulosonate + diphosphate. It participates in nucleotide-sugar biosynthesis; CMP-3-deoxy-D-manno-octulosonate biosynthesis; CMP-3-deoxy-D-manno-octulosonate from 3-deoxy-D-manno-octulosonate and CTP: step 1/1. Its pathway is bacterial outer membrane biogenesis; lipopolysaccharide biosynthesis. In terms of biological role, activates KDO (a required 8-carbon sugar) for incorporation into bacterial lipopolysaccharide in Gram-negative bacteria. This Haemophilus influenzae (strain PittGG) protein is 3-deoxy-manno-octulosonate cytidylyltransferase.